A 312-amino-acid chain; its full sequence is DNA-directed RNA polymerase subunit alpha (312 aa).

The interval 1 to 226 (MIEFEKPKIT…DHLNLFVDLS (226 aa)) is alpha N-terminal domain (alpha-NTD). The alpha C-terminal domain (alpha-CTD) stretch occupies residues 243–312 (TERVLDKIIE…ELGLSLKKRK (70 aa)).

This sequence belongs to the RNA polymerase alpha chain family. In terms of assembly, homodimer. The RNAP catalytic core consists of 2 alpha, 1 beta, 1 beta' and 1 omega subunit. When a sigma factor is associated with the core the holoenzyme is formed, which can initiate transcription.

It catalyses the reaction RNA(n) + a ribonucleoside 5'-triphosphate = RNA(n+1) + diphosphate. In terms of biological role, DNA-dependent RNA polymerase catalyzes the transcription of DNA into RNA using the four ribonucleoside triphosphates as substrates. The protein is DNA-directed RNA polymerase subunit alpha of Lactococcus lactis subsp. cremoris (strain MG1363).